The chain runs to 530 residues: Pyridoxine/pyridoxamine 5'-phosphate oxidase 1, chloroplastic (530 aa).

The transit peptide at 1–64 directs the protein to the chloroplast; sequence MRNVIRRVTT…TLCTKVIIPN (64 aa). An N-acetylmethionine modification is found at M65. The YjeF N-terminal domain occupies 81-297; that stretch reads AAEIDETLMG…SVAEKYKLEL (217 aa). Residue 131-135 participates in (6S)-NADPHX binding; sequence NNGGD. Residues N132 and D196 each coordinate K(+). (6S)-NADPHX is bound by residues 200–206 and D238; that span reads GFSFHGA. S241 contributes to the K(+) binding site. 247–250 is a binding site for pyridoxal 5'-phosphate; the sequence is EGDH. Residue 321–324 coordinates substrate; the sequence is RVNY. 325-327 provides a ligand contact to pyridoxal 5'-phosphate; the sequence is VSP. 374-377 provides a ligand contact to FMN; sequence RMVL. K379 is a binding site for pyridoxal 5'-phosphate. FMN contacts are provided by residues 389 to 390, 395 to 396, and Q418; these read FT and KK. Pyridoxal 5'-phosphate-binding residues include Y436, R440, and S444. FMN contacts are provided by residues 453 to 454 and W499; that span reads QS. 505 to 507 is a binding site for pyridoxal 5'-phosphate; that stretch reads RLH. R509 provides a ligand contact to FMN.

This sequence in the N-terminal section; belongs to the NnrE/AIBP family. The protein in the C-terminal section; belongs to the pyridoxamine 5'-phosphate oxidase family. Homodimer. The cofactor is FMN. Requires K(+) as cofactor. As to expression, expressed in leaves, stems, flowers and roots.

It is found in the plastid. The protein localises to the chloroplast. The catalysed reaction is pyridoxamine 5'-phosphate + O2 + H2O = pyridoxal 5'-phosphate + H2O2 + NH4(+). It catalyses the reaction pyridoxine 5'-phosphate + O2 = pyridoxal 5'-phosphate + H2O2. The enzyme catalyses (6R)-NADHX = (6S)-NADHX. It carries out the reaction (6R)-NADPHX = (6S)-NADPHX. Its pathway is cofactor metabolism; pyridoxal 5'-phosphate salvage; pyridoxal 5'-phosphate from pyridoxamine 5'-phosphate: step 1/1. The protein operates within cofactor metabolism; pyridoxal 5'-phosphate salvage; pyridoxal 5'-phosphate from pyridoxine 5'-phosphate: step 1/1. Catalyzes the oxidation of either pyridoxine 5'-phosphate (PNP) or pyridoxamine 5'-phosphate (PMP) into pyridoxal 5'-phosphate (PLP). Involved in the PLP salvage pathway. Has a higher preference for PNP over PMP. May also catalyze the epimerization of the S- and R-forms of NAD(P)HX, a damaged form of NAD(P)H that is a result of enzymatic or heat-dependent hydration. This is a prerequisite for the S-specific NAD(P)H-hydrate dehydratase to allow the repair of both epimers of NAD(P)HX. This chain is Pyridoxine/pyridoxamine 5'-phosphate oxidase 1, chloroplastic (PPOX1), found in Arabidopsis thaliana (Mouse-ear cress).